A 505-amino-acid chain; its full sequence is Photosystem II CP47 reaction center protein (505 aa).

Topologically, residues 1-19 are cytoplasmic; sequence GLPWYRVHTVLINDPGRLI. The chlorophyll a site is built by His8, His22, His25, His99, and His113. A helical transmembrane segment spans residues 20-35; the sequence is AAHLMHTALVAGWAGS. The Lumenal portion of the chain corresponds to 36–99; it reads MALYELATFD…WSFEGVALAH (64 aa). Residues 100 to 114 traverse the membrane as a helical segment; the sequence is IVLSGLLFLAACWHW. Residues 115-138 are Cytoplasmic-facing; sequence VYWDLELFRDPRTGEPALDLPKMF. The helical transmembrane segment at 139–155 threads the bilayer; sequence GIHLFLAGLLCFGFGAF. Chlorophyll a contacts are provided by His141, His156, His200, His201, and His215. The Lumenal portion of the chain corresponds to 156–201; it reads HLTGLFGPGMWVSDPYGLTGSVQPVAPEWGPDGFNPYNPGGVVAHH. Residues 202-217 form a helical membrane-spanning segment; the sequence is IAAGIVGIIAGLFHIL. The Cytoplasmic segment spans residues 218–235; that stretch reads VRPPQRLYKALRMGNIET. Residues 236–251 traverse the membrane as a helical segment; that stretch reads VLSSSIAAVFFAAFVV. The Lumenal segment spans residues 252–455; sequence AGTMWYGSAT…PRGWFTFAHA (204 aa). Residues His454, His465, and His468 each contribute to the chlorophyll a site. A helical transmembrane segment spans residues 456-471; the sequence is VFALLFFFGHIWHGAR. Over 472 to 505 the chain is Cytoplasmic; sequence TLFRDVFSGIDPELSPEQVEWGFYQKVGDVTTRK.

It belongs to the PsbB/PsbC family. PsbB subfamily. PSII is composed of 1 copy each of membrane proteins PsbA, PsbB, PsbC, PsbD, PsbE, PsbF, PsbH, PsbI, PsbJ, PsbK, PsbL, PsbM, PsbT, PsbX, PsbY, PsbZ, Psb30/Ycf12, peripheral proteins PsbO, CyanoQ (PsbQ), PsbU, PsbV and a large number of cofactors. It forms dimeric complexes. Binds multiple chlorophylls. PSII binds additional chlorophylls, carotenoids and specific lipids. is required as a cofactor.

It localises to the cellular thylakoid membrane. In terms of biological role, one of the components of the core complex of photosystem II (PSII). It binds chlorophyll and helps catalyze the primary light-induced photochemical processes of PSII. PSII is a light-driven water:plastoquinone oxidoreductase, using light energy to abstract electrons from H(2)O, generating O(2) and a proton gradient subsequently used for ATP formation. This is Photosystem II CP47 reaction center protein from Thermostichus vulcanus (Synechococcus vulcanus).